A 637-amino-acid polypeptide reads, in one-letter code: Chaperone protein HtpG (637 aa).

The segment at 1-345 (MSQQETHGFQ…SNDLPLNVSR (345 aa)) is a; substrate-binding. The segment at 346–562 (EILQDNHVTK…DGEMSTQMIK (217 aa)) is b. The tract at residues 563 to 637 (LMQAAGQPVP…MNQMLLANMK (75 aa)) is c.

It belongs to the heat shock protein 90 family. Homodimer.

The protein localises to the cytoplasm. In terms of biological role, molecular chaperone. Has ATPase activity. The chain is Chaperone protein HtpG from Shewanella baltica (strain OS155 / ATCC BAA-1091).